The chain runs to 952 residues: Protein translocase subunit SecA (952 aa).

ATP contacts are provided by residues Gln-104, 122 to 126 (GEGKT), and Asp-512.

This sequence belongs to the SecA family. As to quaternary structure, monomer and homodimer. Part of the essential Sec protein translocation apparatus which comprises SecA, SecYEG and auxiliary proteins SecDF. Other proteins may also be involved.

The protein localises to the cell inner membrane. It localises to the cytoplasm. The enzyme catalyses ATP + H2O + cellular proteinSide 1 = ADP + phosphate + cellular proteinSide 2.. Functionally, part of the Sec protein translocase complex. Interacts with the SecYEG preprotein conducting channel. Has a central role in coupling the hydrolysis of ATP to the transfer of proteins into and across the cell membrane, serving as an ATP-driven molecular motor driving the stepwise translocation of polypeptide chains across the membrane. The chain is Protein translocase subunit SecA from Gloeobacter violaceus (strain ATCC 29082 / PCC 7421).